The chain runs to 886 residues: MQQGYQLDDRPYGRPEQLDYPQTGPSPGAVPGRYGTPSDQLQLNAAQSVDNLSRNSPFADPHQRGPYQTDYAVNPEAHHDAYYNQPYEPTPMEGTPLGYDPGQPGYDHDDLRPMLPHQDSHASEPYQDQPTPQGAGGGIKRWKTVKQVLLYRGNLVLDCPVPPRLLNQLPHGERDEFTHMRYSAATCDPDHFYEENFTLRQRLFSKPRHTELFIVVTMYNEDEILFARSMIGVFKNIEYMCNRKESKTWGKDAWKKIVVCVVSDGRSKINPRTRALLAGMGVYQEGIAKQQVNGKDVTSHIYEYTTQVGMRIEKGVVQLVPKQQPVQILFCLKEKNQKKINSHRWFFSAFGRVLDPNICVLLDAGTKPGGNSIYHLWKAFDLEPMCAGACGEIKAMLGTGGKNLLNPLIATQNFEYKMSNILDKPLESAFGFISVLPGAFSAYRYVALQNDKKGQGPLEKYFAGETLHGSDAGIFESNMYLAEDRILCFELVTKRNCHWILQYVKSATGETDVPDTVTELVLQRRRWLNGSFFAAIYAIAHFYQFFRSDHSFLRKVMLFIEFIFHTINMVFAWFAVGNFFLVFSILTKSLGGDELLGRTGEILGVVFTWLYGVALFTCFVLSMGNRPSGSRWYYTTMVYFWAIIMVYLMFAAIFIAVKAIMADVNDGTPFSLGELFRNPVFYTLIVSVMSTYGIWFLASFLMFDPWHMFTSFVQYMLLTPTYINILNVYAFCNTHDISWGTKGDDQAEKLPSVSTKDGSGKTDLPDESDLNAQYERELTAFGSKPIKVVHTPTEAQRAEAQMDYYRGVRSITVLAWMITNFGLAAVVLSAAGLDRIDPKHQTAEEEDPNARANIYMTVVLWSVAGLAAFKFIGAMWFLVVRMFRGV.

Disordered regions lie at residues 1–70 (MQQG…YQTD) and 86–138 (PYEP…AGGG). Residues 7 to 17 (LDDRPYGRPEQ) show a composition bias toward basic and acidic residues. Over residues 37-56 (PSDQLQLNAAQSVDNLSRNS) the composition is skewed to polar residues. The N-linked (GlcNAc...) asparagine glycan is linked to Asn-51. The segment covering 106–122 (YDHDDLRPMLPHQDSHA) has biased composition (basic and acidic residues). N-linked (GlcNAc...) asparagine glycosylation occurs at Asn-196. 7 helical membrane-spanning segments follow: residues 428–448 (SAFG…YVAL), 526–546 (RWLN…YQFF), 556–576 (VMLF…WFAV), 602–622 (ILGV…FVLS), 637–657 (MVYF…FIAV), 683–703 (TLIV…FLMF), and 712–732 (FVQY…YAFC). Residues 745–768 (DQAEKLPSVSTKDGSGKTDLPDES) form a disordered region. 2 consecutive transmembrane segments (helical) span residues 813-833 (VLAW…AAGL) and 858-878 (VVLW…MWFL).

Belongs to the chitin synthase family. Class I subfamily.

It localises to the cell membrane. It carries out the reaction [(1-&gt;4)-N-acetyl-beta-D-glucosaminyl](n) + UDP-N-acetyl-alpha-D-glucosamine = [(1-&gt;4)-N-acetyl-beta-D-glucosaminyl](n+1) + UDP + H(+). Functionally, polymerizes chitin, a structural polymer of the cell wall and septum, by transferring the sugar moiety of UDP-GlcNAc to the non-reducing end of the growing chitin polymer. Involved in tolerance to hyperosmotic conditions. CHS3 is the only V.dahliae chitin synthase that is not involved in virulence. In Verticillium dahliae (strain VdLs.17 / ATCC MYA-4575 / FGSC 10137) (Verticillium wilt), this protein is Chitin synthase 3.